The primary structure comprises 453 residues: Chromosomal replication initiator protein DnaA (453 aa).

The segment at 1 to 74 (MKEKQFWNRI…GFEIYDAEIT (74 aa)) is domain I, interacts with DnaA modulators. The domain II stretch occupies residues 74 to 113 (TPHYIFTKPQDTTSSQVEEATNLTLYDYSPKLVSIPYSDT). The domain III, AAA+ region stretch occupies residues 114–331 (GLKEKYTFDN…GAINDITLIA (218 aa)). ATP is bound by residues glycine 158, glycine 160, lysine 161, and threonine 162. A domain IV, binds dsDNA region spans residues 332-453 (RVKKIKDITI…EIESIKKKIK (122 aa)).

It belongs to the DnaA family. In terms of assembly, oligomerizes as a right-handed, spiral filament on DNA at oriC. Interacts (via domains I and III) with CcrZ.

It is found in the cytoplasm. CcrZ stimulates DnaA, possibly by phosphorylation of an intermediate molecule, to initiate DNA replication. Its function is as follows. Plays an essential role in the initiation and regulation of chromosomal replication. ATP-DnaA binds to the origin of replication (oriC) to initiate formation of the DNA replication initiation complex once per cell cycle. Binds the DnaA box (a 9 base pair repeat at the origin) and separates the double-stranded (ds)DNA. Forms a right-handed helical filament on oriC DNA; dsDNA binds to the exterior of the filament while single-stranded (ss)DNA is stabiized in the filament's interior. The ATP-DnaA-oriC complex binds and stabilizes one strand of the AT-rich DNA unwinding element (DUE), permitting loading of DNA polymerase. After initiation quickly degrades to an ADP-DnaA complex that is not apt for DNA replication. Binds acidic phospholipids. Functionally, mutations in this gene suppress a deletion of cell cycle regulator ccrZ. This Streptococcus pneumoniae serotype 2 (strain D39 / NCTC 7466) protein is Chromosomal replication initiator protein DnaA.